We begin with the raw amino-acid sequence, 107 residues long: Acetyl-CoA acetyltransferase (107 aa).

The active-site Acyl-thioester intermediate is C88.

The protein belongs to the thiolase-like superfamily. Thiolase family. In terms of assembly, homotetramer.

The protein resides in the cytoplasm. The catalysed reaction is 2 acetyl-CoA = acetoacetyl-CoA + CoA. In terms of biological role, catalyzes the condensation of two molecules of acetyl-CoA to produce acetoacetyl-CoA. The chain is Acetyl-CoA acetyltransferase (thi) from Clostridioides difficile (Peptoclostridium difficile).